A 298-amino-acid chain; its full sequence is Fluorinase (298 aa).

Residues Asp-14, 19-21 (DDS), Tyr-75, Ser-156, Asp-209, Asn-214, 268-269 (SR), and 276-278 (RNA) each bind S-adenosyl-L-methionine.

It belongs to the SAM hydrolase / SAM-dependent halogenase family.

It carries out the reaction fluoride + S-adenosyl-L-methionine = 5'-deoxy-5'-fluoroadenosine + L-methionine. In terms of biological role, catalyzes the formation of a C-F bond by combining S-adenosyl-L-methionine (SAM) and fluoride to generate 5'-fluoro-5'-deoxyadenosine (5'-FDA) and L-methionine. The chain is Fluorinase from Actinoplanes sp. (strain N902-109).